A 425-amino-acid polypeptide reads, in one-letter code: UDP-N-acetylglucosamine 1-carboxyvinyltransferase (425 aa).

Residue 22–23 (KN) participates in phosphoenolpyruvate binding. Arg98 contributes to the UDP-N-acetyl-alpha-D-glucosamine binding site. The active-site Proton donor is the Cys122. At Cys122 the chain carries 2-(S-cysteinyl)pyruvic acid O-phosphothioketal. UDP-N-acetyl-alpha-D-glucosamine-binding positions include 127-131 (RPVDQ), Asp313, and Ile335.

The protein belongs to the EPSP synthase family. MurA subfamily.

Its subcellular location is the cytoplasm. The catalysed reaction is phosphoenolpyruvate + UDP-N-acetyl-alpha-D-glucosamine = UDP-N-acetyl-3-O-(1-carboxyvinyl)-alpha-D-glucosamine + phosphate. The protein operates within cell wall biogenesis; peptidoglycan biosynthesis. Functionally, cell wall formation. Adds enolpyruvyl to UDP-N-acetylglucosamine. In Xylella fastidiosa (strain M23), this protein is UDP-N-acetylglucosamine 1-carboxyvinyltransferase.